A 198-amino-acid chain; its full sequence is Imidazoleglycerol-phosphate dehydratase (198 aa).

This sequence belongs to the imidazoleglycerol-phosphate dehydratase family.

The protein localises to the cytoplasm. It catalyses the reaction D-erythro-1-(imidazol-4-yl)glycerol 3-phosphate = 3-(imidazol-4-yl)-2-oxopropyl phosphate + H2O. It participates in amino-acid biosynthesis; L-histidine biosynthesis; L-histidine from 5-phospho-alpha-D-ribose 1-diphosphate: step 6/9. This chain is Imidazoleglycerol-phosphate dehydratase, found in Herminiimonas arsenicoxydans.